A 407-amino-acid chain; its full sequence is Phosphopentomutase (407 aa).

Aspartate 10, aspartate 306, histidine 311, aspartate 347, histidine 348, and histidine 359 together coordinate Mn(2+).

It belongs to the phosphopentomutase family. It depends on Mn(2+) as a cofactor.

It localises to the cytoplasm. The catalysed reaction is 2-deoxy-alpha-D-ribose 1-phosphate = 2-deoxy-D-ribose 5-phosphate. It carries out the reaction alpha-D-ribose 1-phosphate = D-ribose 5-phosphate. The protein operates within carbohydrate degradation; 2-deoxy-D-ribose 1-phosphate degradation; D-glyceraldehyde 3-phosphate and acetaldehyde from 2-deoxy-alpha-D-ribose 1-phosphate: step 1/2. Its function is as follows. Isomerase that catalyzes the conversion of deoxy-ribose 1-phosphate (dRib-1-P) and ribose 1-phosphate (Rib-1-P) to deoxy-ribose 5-phosphate (dRib-5-P) and ribose 5-phosphate (Rib-5-P), respectively. The chain is Phosphopentomutase from Yersinia enterocolitica serotype O:8 / biotype 1B (strain NCTC 13174 / 8081).